Reading from the N-terminus, the 323-residue chain is Phospho-N-acetylmuramoyl-pentapeptide-transferase (323 aa).

The next 9 helical transmembrane spans lie at 12-32 (IVMA…IIIP), 58-78 (PTIG…IMVG), 84-104 (AMIA…DDLL), 120-140 (MILL…YIGT), 151-171 (INFG…VTNA), 177-197 (GLDG…GIIS), 200-220 (LGHI…LAFL), 229-250 (VFMG…ALIL), and 303-323 (KIVS…FASL).

Belongs to the glycosyltransferase 4 family. MraY subfamily. Requires Mg(2+) as cofactor.

It is found in the cell membrane. It carries out the reaction UDP-N-acetyl-alpha-D-muramoyl-L-alanyl-gamma-D-glutamyl-meso-2,6-diaminopimeloyl-D-alanyl-D-alanine + di-trans,octa-cis-undecaprenyl phosphate = di-trans,octa-cis-undecaprenyl diphospho-N-acetyl-alpha-D-muramoyl-L-alanyl-D-glutamyl-meso-2,6-diaminopimeloyl-D-alanyl-D-alanine + UMP. The protein operates within cell wall biogenesis; peptidoglycan biosynthesis. Its function is as follows. Catalyzes the initial step of the lipid cycle reactions in the biosynthesis of the cell wall peptidoglycan: transfers peptidoglycan precursor phospho-MurNAc-pentapeptide from UDP-MurNAc-pentapeptide onto the lipid carrier undecaprenyl phosphate, yielding undecaprenyl-pyrophosphoryl-MurNAc-pentapeptide, known as lipid I. This Clostridium perfringens (strain ATCC 13124 / DSM 756 / JCM 1290 / NCIMB 6125 / NCTC 8237 / Type A) protein is Phospho-N-acetylmuramoyl-pentapeptide-transferase.